The following is a 148-amino-acid chain: Snaclec 27 (148 aa).

The first 23 residues, 1-23 (WGDSSSSASACWSCFSLVSGIGA), serve as a signal peptide directing secretion. 3 disulfides stabilise this stretch: Cys-27-Cys-38, Cys-55-Cys-144, and Cys-121-Cys-136. The C-type lectin domain occupies 34 to 145 (HEGHCYKVFS…CSSTQQFVCK (112 aa)).

The protein belongs to the snaclec family. As to quaternary structure, heterodimer; disulfide-linked. In terms of tissue distribution, expressed by the venom gland.

It is found in the secreted. Functionally, interferes with one step of hemostasis (modulation of platelet aggregation, or coagulation cascade, for example). This chain is Snaclec 27, found in Echis ocellatus (Ocellated saw-scaled viper).